We begin with the raw amino-acid sequence, 208 residues long: Small ribosomal subunit protein uS4 (208 aa).

The S4 RNA-binding domain maps to 98–160 (SRLDNVAYNM…AKSYLRIKSS (63 aa)).

Belongs to the universal ribosomal protein uS4 family. As to quaternary structure, part of the 30S ribosomal subunit. Contacts protein S5. The interaction surface between S4 and S5 is involved in control of translational fidelity.

In terms of biological role, one of the primary rRNA binding proteins, it binds directly to 16S rRNA where it nucleates assembly of the body of the 30S subunit. Functionally, with S5 and S12 plays an important role in translational accuracy. The chain is Small ribosomal subunit protein uS4 from Nitrosomonas eutropha (strain DSM 101675 / C91 / Nm57).